A 362-amino-acid polypeptide reads, in one-letter code: Fructose-bisphosphate aldolase (362 aa).

S65 provides a ligand contact to D-glyceraldehyde 3-phosphate. Residue D112 is the Proton donor of the active site. H113, D147, E177, and H229 together coordinate Zn(2+). G230 provides a ligand contact to dihydroxyacetone phosphate. H268 contacts Zn(2+). Dihydroxyacetone phosphate is bound by residues 269-271 and 290-293; these read GGS and NVDT.

This sequence belongs to the class II fructose-bisphosphate aldolase family. As to quaternary structure, homodimer. Zn(2+) is required as a cofactor.

It catalyses the reaction beta-D-fructose 1,6-bisphosphate = D-glyceraldehyde 3-phosphate + dihydroxyacetone phosphate. The protein operates within carbohydrate degradation; glycolysis; D-glyceraldehyde 3-phosphate and glycerone phosphate from D-glucose: step 4/4. Functionally, catalyzes the aldol condensation of dihydroxyacetone phosphate (DHAP or glycerone-phosphate) with glyceraldehyde 3-phosphate (G3P) to form fructose 1,6-bisphosphate (FBP) in gluconeogenesis and the reverse reaction in glycolysis. The protein is Fructose-bisphosphate aldolase (fbaA) of Aspergillus oryzae (strain ATCC 42149 / RIB 40) (Yellow koji mold).